Here is a 556-residue protein sequence, read N- to C-terminus: Probable zinc metalloprotease EGY2, chloroplastic (556 aa).

The N-terminal 64 residues, 1–64, are a transit peptide targeting the chloroplast; that stretch reads MNLAVASFRG…VFRKRETLVR (64 aa). The tract at residues 63–133 is disordered; that stretch reads VRVTETQTEP…DGDKLEVSSG (71 aa). 7 helical membrane-spanning segments follow: residues 267–287, 311–331, 336–356, 374–394, 437–457, 484–504, and 527–547; these read AVPE…TLFL, LPGA…HILV, GIKL…FGAI, AAGP…GLFV, PLVI…IPAG, LLGL…LIFF, and LGIL…FAFT.

It belongs to the peptidase M50B family.

It localises to the plastid. The protein resides in the chloroplast membrane. Functionally, probable membrane-associated metalloprotease that may be involved in chloroplast development. The polypeptide is Probable zinc metalloprotease EGY2, chloroplastic (EGY2) (Arabidopsis thaliana (Mouse-ear cress)).